The chain runs to 406 residues: Phosphopentomutase (406 aa).

6 residues coordinate Mn(2+): aspartate 10, aspartate 305, histidine 310, aspartate 346, histidine 347, and histidine 358.

It belongs to the phosphopentomutase family. Mn(2+) is required as a cofactor.

The protein localises to the cytoplasm. The enzyme catalyses 2-deoxy-alpha-D-ribose 1-phosphate = 2-deoxy-D-ribose 5-phosphate. The catalysed reaction is alpha-D-ribose 1-phosphate = D-ribose 5-phosphate. The protein operates within carbohydrate degradation; 2-deoxy-D-ribose 1-phosphate degradation; D-glyceraldehyde 3-phosphate and acetaldehyde from 2-deoxy-alpha-D-ribose 1-phosphate: step 1/2. Its function is as follows. Isomerase that catalyzes the conversion of deoxy-ribose 1-phosphate (dRib-1-P) and ribose 1-phosphate (Rib-1-P) to deoxy-ribose 5-phosphate (dRib-5-P) and ribose 5-phosphate (Rib-5-P), respectively. This Vibrio parahaemolyticus serotype O3:K6 (strain RIMD 2210633) protein is Phosphopentomutase.